The following is a 410-amino-acid chain: Aminopeptidase AmpS (410 aa).

The a divalent metal cation site is built by Glu-250, Glu-316, Glu-340, His-345, His-378, and Asp-380.

This sequence belongs to the peptidase M29 family. Requires Co(2+) as cofactor. It depends on Zn(2+) as a cofactor. Mg(2+) serves as cofactor.

Functionally, metal-dependent exopeptidase. The protein is Aminopeptidase AmpS (ampS) of Bacillus subtilis (strain 168).